The chain runs to 247 residues: Probable transcriptional regulatory protein Gbem_3313 (247 aa).

It belongs to the TACO1 family.

It is found in the cytoplasm. This Citrifermentans bemidjiense (strain ATCC BAA-1014 / DSM 16622 / JCM 12645 / Bem) (Geobacter bemidjiensis) protein is Probable transcriptional regulatory protein Gbem_3313.